The primary structure comprises 154 residues: 3-hydroxyacyl-[acyl-carrier-protein] dehydratase FabZ (154 aa).

H54 is a catalytic residue.

This sequence belongs to the thioester dehydratase family. FabZ subfamily.

The protein localises to the cytoplasm. The catalysed reaction is a (3R)-hydroxyacyl-[ACP] = a (2E)-enoyl-[ACP] + H2O. Involved in unsaturated fatty acids biosynthesis. Catalyzes the dehydration of short chain beta-hydroxyacyl-ACPs and long chain saturated and unsaturated beta-hydroxyacyl-ACPs. This is 3-hydroxyacyl-[acyl-carrier-protein] dehydratase FabZ from Chlamydia abortus (strain DSM 27085 / S26/3) (Chlamydophila abortus).